The sequence spans 273 residues: 5-deoxy-glucuronate isomerase (273 aa).

The protein belongs to the isomerase IolB family.

The catalysed reaction is 5-deoxy-D-glucuronate = 5-dehydro-2-deoxy-D-gluconate. It participates in polyol metabolism; myo-inositol degradation into acetyl-CoA; acetyl-CoA from myo-inositol: step 4/7. Functionally, involved in the isomerization of 5-deoxy-glucuronate (5DG) to 5-dehydro-2-deoxy-D-gluconate (DKG or 2-deoxy-5-keto-D-gluconate). This Listeria monocytogenes serotype 4b (strain CLIP80459) protein is 5-deoxy-glucuronate isomerase.